Reading from the N-terminus, the 546-residue chain is Glutathione synthetase, chloroplastic (546 aa).

The N-terminal 63 residues, 1-63 (MGSGCSSPSI…SPLKCAKVPE (63 aa)), are a transit peptide targeting the chloroplast. Arginine 200 contacts substrate. Glutamate 216 lines the ATP pocket. The Mg(2+) site is built by glutamate 216 and asparagine 218. Substrate-binding positions include 220 to 223 (ISSS), 288 to 290 (ERN), glutamine 294, and 342 to 345 (RAGY). ATP contacts are provided by residues lysine 381, 435–444 (KPQREGGGNN), tyrosine 446, 471–474 (MQRI), and glutamate 497. Glutamate 439 lines the Mg(2+) pocket. Arginine 522 contacts substrate. ATP is bound by residues lysine 524 and glutamate 530. A substrate-binding site is contributed by 533–534 (VA).

It belongs to the eukaryotic GSH synthase family. In terms of assembly, homodimer. Mg(2+) serves as cofactor.

It is found in the plastid. It localises to the chloroplast. It carries out the reaction gamma-L-glutamyl-L-cysteine + glycine + ATP = glutathione + ADP + phosphate + H(+). It participates in sulfur metabolism; glutathione biosynthesis; glutathione from L-cysteine and L-glutamate: step 2/2. This chain is Glutathione synthetase, chloroplastic (GSH2), found in Solanum lycopersicum (Tomato).